The chain runs to 206 residues: tRNA(Phe) 7-((3-amino-3-carboxypropyl)-4-demethylwyosine(37)-N(4))-methyltransferase 2 (206 aa).

It belongs to the TYW3 family.

The catalysed reaction is 4-demethyl-7-[(3S)-3-amino-3-carboxypropyl]wyosine(37) in tRNA(Phe) + S-adenosyl-L-methionine = 7-[(3S)-3-amino-3-carboxypropyl]wyosine(37) in tRNA(Phe) + S-adenosyl-L-homocysteine + H(+). Functionally, S-adenosyl-L-methionine-dependent methyltransferase that acts as a component of the wyosine derivatives biosynthesis pathway. Probably methylates N-4 position of wybutosine-86 to produce wybutosine-72. In Pyrococcus furiosus (strain ATCC 43587 / DSM 3638 / JCM 8422 / Vc1), this protein is tRNA(Phe) 7-((3-amino-3-carboxypropyl)-4-demethylwyosine(37)-N(4))-methyltransferase 2.